A 480-amino-acid polypeptide reads, in one-letter code: Glycerol 3-phosphate dehydrogenase (480 aa).

Residues Ile12, Glu31, 40-41 (TT), and 45-47 (SAI) each bind FAD. Sn-glycerol 3-phosphate contacts are provided by Ser45 and His49. The Proton acceptor role is filled by His49. Position 172 (Val172) interacts with FAD. The sn-glycerol 3-phosphate site is built by Lys249 and Arg310. Residue 335 to 336 (IE) participates in FAD binding. Ser337 serves as a coordination point for sn-glycerol 3-phosphate. FAD is bound at residue Ser341. The [2Fe-2S] cluster site is built by Cys400, Cys402, Cys437, and Cys442.

The cofactor is [2Fe-2S] cluster.

The catalysed reaction is sn-glycerol 3-phosphate + A = dihydroxyacetone phosphate + AH2. It functions in the pathway polyol metabolism; glycerol degradation via glycerol kinase pathway; glycerone phosphate from sn-glycerol 3-phosphate (aerobic route): step 1/1. Functionally, catalyzes the dehydrogenation of glycerol 3-phosphate to dihydroxyacetone phosphate. Is probably involved in anaerobic glycerol metabolism. Active in vitro with the artificial electron acceptor 2,6-dichlorophenolindophenol (DCPIP), but not with NAD or NADP. Also displays a very low oxidase activity in vitro on glycerol 3-phosphate with O2 as the electron acceptor, but this activity is most likely not physiological. This Caloramator mitchellensis protein is Glycerol 3-phosphate dehydrogenase.